The primary structure comprises 584 residues: Pectinesterase 1 (584 aa).

The first 42 residues, 1–42 (MTHIKEFFTKLSESSSNQNISNIPKKKKKLFLALFATLLVVA), serve as a signal peptide directing secretion. 3 N-linked (GlcNAc...) asparagine glycosylation sites follow: Asn108, Asn129, and Asn226. The substrate site is built by Thr348 and Gln378. Asp401 (proton donor) is an active-site residue. Cys415 and Cys435 are joined by a disulfide. Asp422 (nucleophile) is an active-site residue. Residues Arg490 and Trp492 each contribute to the substrate site.

In the N-terminal section; belongs to the PMEI family. The protein in the C-terminal section; belongs to the pectinesterase family. In terms of tissue distribution, expressed at high levels in flower buds, shoots and young leaves, and at lower levels in young fruit, young bark and juice vesicles. Not expressed at significant levels in leaf abscission zones following ethylene treatment or in mature leaves. In fruit abscission zones, expression was initially undetectable but increased markedly following ethylene treatment.

It is found in the secreted. The protein localises to the cell wall. It catalyses the reaction [(1-&gt;4)-alpha-D-galacturonosyl methyl ester](n) + n H2O = [(1-&gt;4)-alpha-D-galacturonosyl](n) + n methanol + n H(+). Its pathway is glycan metabolism; pectin degradation; 2-dehydro-3-deoxy-D-gluconate from pectin: step 1/5. In terms of biological role, acts in the modification of cell walls via demethylesterification of cell wall pectin. The chain is Pectinesterase 1 (PECS-1.1) from Citrus sinensis (Sweet orange).